The following is a 632-amino-acid chain: DNA ligase (632 aa).

NAD(+) contacts are provided by residues 45–49 and 89–90; these read NEDYD and SI. K127 (N6-AMP-lysine intermediate) is an active-site residue. Positions 143, 174, and 286 each coordinate NAD(+). 4 residues coordinate Zn(2+): C374, C377, C390, and C396. One can recognise a BRCT domain in the interval 561–632; sequence DKRIVFTGKM…EADYLSKITM (72 aa).

The protein belongs to the NAD-dependent DNA ligase family. LigA subfamily. Mg(2+) serves as cofactor. Mn(2+) is required as a cofactor.

It catalyses the reaction NAD(+) + (deoxyribonucleotide)n-3'-hydroxyl + 5'-phospho-(deoxyribonucleotide)m = (deoxyribonucleotide)n+m + AMP + beta-nicotinamide D-nucleotide.. In terms of biological role, DNA ligase that catalyzes the formation of phosphodiester linkages between 5'-phosphoryl and 3'-hydroxyl groups in double-stranded DNA using NAD as a coenzyme and as the energy source for the reaction. It is essential for DNA replication and repair of damaged DNA. The sequence is that of DNA ligase from Vesicomyosocius okutanii subsp. Calyptogena okutanii (strain HA).